Consider the following 398-residue polypeptide: Bifunctional enzyme IspD/IspF (398 aa).

The tract at residues 1 to 234 (MANSRRTAAI…SRLAALLGDI (234 aa)) is 2-C-methyl-D-erythritol 4-phosphate cytidylyltransferase. The tract at residues 235–398 (RTGTGYDVHA…LPWGPNGLSG (164 aa)) is 2-C-methyl-D-erythritol 2,4-cyclodiphosphate synthase. A divalent metal cation contacts are provided by aspartate 241 and histidine 243. 4-CDP-2-C-methyl-D-erythritol 2-phosphate contacts are provided by residues 241 to 243 (DVH) and 267 to 268 (HS). An a divalent metal cation-binding site is contributed by histidine 275. 4-CDP-2-C-methyl-D-erythritol 2-phosphate contacts are provided by residues 289 to 291 (DIG), 365 to 368 (TTSE), phenylalanine 372, and arginine 375.

This sequence in the N-terminal section; belongs to the IspD/TarI cytidylyltransferase family. IspD subfamily. The protein in the C-terminal section; belongs to the IspF family. A divalent metal cation is required as a cofactor.

It carries out the reaction 2-C-methyl-D-erythritol 4-phosphate + CTP + H(+) = 4-CDP-2-C-methyl-D-erythritol + diphosphate. It catalyses the reaction 4-CDP-2-C-methyl-D-erythritol 2-phosphate = 2-C-methyl-D-erythritol 2,4-cyclic diphosphate + CMP. The protein operates within isoprenoid biosynthesis; isopentenyl diphosphate biosynthesis via DXP pathway; isopentenyl diphosphate from 1-deoxy-D-xylulose 5-phosphate: step 2/6. Its pathway is isoprenoid biosynthesis; isopentenyl diphosphate biosynthesis via DXP pathway; isopentenyl diphosphate from 1-deoxy-D-xylulose 5-phosphate: step 4/6. Bifunctional enzyme that catalyzes the formation of 4-diphosphocytidyl-2-C-methyl-D-erythritol from CTP and 2-C-methyl-D-erythritol 4-phosphate (MEP) (IspD), and catalyzes the conversion of 4-diphosphocytidyl-2-C-methyl-D-erythritol 2-phosphate (CDP-ME2P) to 2-C-methyl-D-erythritol 2,4-cyclodiphosphate (ME-CPP) with a corresponding release of cytidine 5-monophosphate (CMP) (IspF). This Rhodopseudomonas palustris (strain BisA53) protein is Bifunctional enzyme IspD/IspF.